The sequence spans 373 residues: MEYQLTLNWPDFLERHWQKRPVVLKRGFNNFIDPISPDELAGLAMESEVDSRLVSHQDGKWQVSHGPFESYDHLGETNWSLLVQAVNHWHEPTAALMRPFRELPDWRIDDLMISFSVPGGGVGPHLDQYDVFIIQGTGRRRWRVGEKLQMKQHCPHPDLLQVDPFEAIIDEELEPGDILYIPPGFPHEGYALENAMNYSVGFRAPNTRELISGFADYVLQRELGGNYYSDPDVPPRAHPADVLPQEMDKLREMMLELINQPEHFKQWFGEFISQSRHELDIAPPEPPYQPDEIYDALKQGEVLVRLGGLRVLRIGDDVYANGEKIDSPHRPALDALASNIALTAENFGDALEDPSFLAMLAALVNSGYWFFEG.

One can recognise a JmjC domain in the interval 92–219 (PTAALMRPFR…LISGFADYVL (128 aa)). Residues S114, 125 to 127 (HLD), R140, and H187 each bind substrate. Fe cation contacts are provided by H125 and D127. Residue H187 participates in Fe cation binding.

Belongs to the ROX family. RoxA/YcfD subfamily. Homodimer. The cofactor is Fe(2+).

It carries out the reaction L-arginyl-[ribosomal protein uL16] + 2-oxoglutarate + O2 = (3R)-3-hydroxy-L-arginyl-[ribosomal protein uL16] + succinate + CO2. Functionally, growth-regulating oxygenase that catalyzes the hydroxylation of ribosomal protein uL16 on 'Arg-81'. The protein is Ribosomal protein uL16 3-hydroxylase (roxA) of Escherichia coli (strain K12).